The chain runs to 558 residues: Arginine--tRNA ligase (558 aa).

The 'HIGH' region motif lies at 119-129 (PNIAKPMSMGH).

This sequence belongs to the class-I aminoacyl-tRNA synthetase family. In terms of assembly, monomer.

The protein resides in the cytoplasm. The catalysed reaction is tRNA(Arg) + L-arginine + ATP = L-arginyl-tRNA(Arg) + AMP + diphosphate. The polypeptide is Arginine--tRNA ligase (Lactobacillus johnsonii (strain CNCM I-12250 / La1 / NCC 533)).